Consider the following 278-residue polypeptide: Hydroxyethylthiazole kinase (278 aa).

A substrate-binding site is contributed by M46. ATP-binding residues include R122 and T168. Residue G195 coordinates substrate.

This sequence belongs to the Thz kinase family. It depends on Mg(2+) as a cofactor.

It carries out the reaction 5-(2-hydroxyethyl)-4-methylthiazole + ATP = 4-methyl-5-(2-phosphooxyethyl)-thiazole + ADP + H(+). It participates in cofactor biosynthesis; thiamine diphosphate biosynthesis; 4-methyl-5-(2-phosphoethyl)-thiazole from 5-(2-hydroxyethyl)-4-methylthiazole: step 1/1. Catalyzes the phosphorylation of the hydroxyl group of 4-methyl-5-beta-hydroxyethylthiazole (THZ). In Chloroflexus aggregans (strain MD-66 / DSM 9485), this protein is Hydroxyethylthiazole kinase.